We begin with the raw amino-acid sequence, 4471 residues long: MVPEEVEVEIDEIPVLSEEGEEEEETYSQKVESVDKVRAKRVSLRTESLGQPLNREDEEMDKEISEKLPSKRTAKHIMEKMHLHMLCTPLPEEFLDQNVVFFLRNTKEAISEATDMKEAMEIMPETLEYGIINANVLHFLKNIICQVFLPALSFNQHRTSTTVGVTSGEVSNSSEHESDLPPMPGEAVEYHSIQLIRDEFLMNVQKFASNIQRTMQQLEGEIKLEMPIISVEGEVSDLAADPETVDILEQCVINWLNQISTAVEAQLKKTPQGKGPLAEIEFWRERNATLSALHEQTKLPIVRKVLDVIKESDSMLVANLQPVFTELFKFHTEASDNVRFLSTVERYFKNITHGSGFHVVLDTIPAMMSALRMVWIISRHYNKDERMIPLMERIAWEIAERVCRVVNLRTLFKENRASAQSKTLEARNTLRLWKKAYFDTRAKIEASGREDRWEFDRKRLFERTDYMATICQDLSDVLQILEEFYNIFGPELKAVTGDPKRIDDVLCRVDGLVTPMENLTFDPFSIKSSQFWKYVMDEFKIEVLIDIINKIFVQNLENPPLYKNHPPVAGAIYWERSLFFRIKHTILRFQEVQEILDSDRGQEVKQKYLEVGRTMKEYEDRKYEQWMEVTEQVLPALMKKSLLTKSSIATEEPSTLERGAVFAINFSPALREIINETKYLEQLGFTVPELARNVALQEDKFLRYTAGIQRMLDHYHMLIGTLNDAESVLLKDHSQELLRVFRSGYKRLNWNSLGIGDYITGCKQAIGKFESLVHQIHKNADDISSRLTLIEAINLFKYPAAKSEEELPGVKEFFEHIERERASDVDHMVRWYLAIGPLLTKVEGLVVHTNTGKAPKLASYYKYWEKKIYEVLTKLILKNLQSFNSLILGNVPLFHTETILTAPEIILHPNTNEIDKMCFHCVRNCVEITKHFVRWMNGSCIECPPQKGEEEEVVIINFYNDISLNPQIIEQAVMIPQNVHRILINLMKYLQKWKRYRPLWKLDKAIVMEKFAAKKPPCVAYDEKLQFYSKIAYEVMRHPLIKDEHCIRLQLRHLANTVQENAKSWVISLGKLLNESAKEELYNLHEEMEHLAKNLRKIPNTLEDLKFVLATIAEIRSKSLVMELRYRDVQERYRTMAMYNLFPPDAEKELVDKIESIWSNLFNDSVNVEHALGDIKRTFTELTRGEIMNYRVQIEEFAKRFYSEGPGSVGDDLDKGVELLGVYERELARHEKSRQELANAEKLFDLPITMYPELLKVQKEMSGLRMIYELYEGLKVAKEEWSQTLWINLNVQILQEGIEGFLRALRKLPRPVRGLSVTYYLEAKMKAFKDSIPLLLDLKNEALRDRHWKELMEKTSVFFEMTETFTLENMFAMELHKHTDVLNEIVTAAIKEVAIEKAVKEILDTWENMKFTVVKYCKGTQERGYILGSVDEIIQSLDDNTFNLQSISGSRFVGPFLQTVHKWEKTLSLIGEVIEIWMLVQRKWMYLESIFIGGDIRSQLPEEAKKFDNIDKVFKRIMGETLKDPVIKRCCEAPNRLSDLQNVSEGLEKCQKSLNDYLDSKRNAFPRFFFISDDELLSILGSSDPLCVQEHMIKMYDNIASLRFNDGDSGEKLVSAMISAEGEVMEFRKILRAEGRVEDWMTAVLNEMRRTNRLITKEAIFRYCEDRSRVDWMLLYQGMVVLAASQVWWTWEVEDVFHKAQKGEKQAMKNYGRKMHRQIDELVTRITMPLSKNDRKKYNTVLIIDVHARDIVDSFIRGSILEAREFDWESQLRFYWDREPDELNIRQCTGTFGYGYEYMGLNGRLVITPLTDRIYLTLTQALSMYLGGAPAGPAGTGKTETTKDLAKALGLLCVVTNCGEGMDYRAVGKIFSGLAQCGAWGCFDEFNRIDASVLSVISSQIQTIRNALIHQLTTFQFEGQEISLDSRMGIFITMNPGYAGRTELPESVKALFRPVVVIVPDLQQICEIMLFSEGFLEAKTLAKKMTVLYKLAREQLSKQYHYDFGLRALKSVLVMAGELKRGSSDLREDVVLMRALRDMNLPKFVFEDVPLFLGLISDLFPGLDCPRVRYPDFNDAVEQVLEENGYAVLPIQVDKVVQMFETMLTRHTTMVVGPTRGGKSVVINTLCQAQTKLGLTTKLYILNPKAVSVIELYGILDPTTRDWTDGVLSNIFREINKPTDKKERKYILFDGDVDALWVENMNSVMDDNRLLTLANGERIRLQAHCALLFEVGDLQYASPATVSRCGMVYVDPKNLKYRPYWKKWVNQIPNKVEQYNLNSLFEKYVPYLMDVIVEGIVDGRQAEKLKTIVPQTDLNMVTQLAKMLDALLEGEIEDLDLLECYFLEALYCSLGASLLEDGRMKFDEYIKRLASLSTVDTEGVWANPGELPGQLPTLYDFHFDNKRNQWVPWSKLVPEYIHAPERKFINILVHTVDTTRTTWILEQMVKIKQPVIFVGESGTSKTATTQNFLKNLSEETNIVLMVNFSSRTTSMDIQRNLEANVEKRTKDTYGPPMGKRLLVFMDDMNMPRVDEYGTQQPIALLKLLLEKGYLYDRGKELNCKSIRDLGFIAAMGKAGGGRNEVDPRFISLFSVFNVPFPSEESLHLIYSSILKGHTSTFHESIVAVSGKLTFCTLALYKNIVQDLPPTPSKFHYIFNLRDLSRVFNGLVLTNPERFQTVAQMVRVWRNECLRVFHDRLISETDKQLVQQHIGSLVVEHFKDDVEVVMRDPILFGDFQMALHEGEPRIYEDIQDYEAAKALFQEILEEYNESNTKMNLVLFDDALEHLTRVHRIIRMDRGHALLVGVGGSGKQSLSRLAAFTASCEVFEILLSRGYSENSFREDLKSLYLKLGIENKAMIFLFTDAHVAEEGFLELINNMLTSGIVPALFSEEEKESILSQIGQEALKQGMGPAKESVWQYFVNKSANNLHIVLGMSPVGDTLRTWCRNFPGMVNNTGIDWFMPWPPQALHAVAKSFLGYNPMIPAENIENVVKHVVLVHQSVDHYSQQFLQKLRRSNYVTPKNYLDFINTYSKLLDEKTQCNIAQCKRLDGGLDKLKEATIQLDELNQKLAEQKIVLAEKSAACEALLEEIAVNTAVAEEKKKLAEEKAMEIEEQNKVIAMEKAEAETTLAEVMPILEAAKLELQKLDKSDVTEIRSFAKPPKQVQTVCECILIMKGYKELNWKTAKGVMSDPNFLRSLMEIDFDSITQSQVKNIKGLLKTLNTTTEEMEAVSKAGLGMLKFVEAVMGYCDVFREIKPKREKVARLERNFYLTKRELERIQNELAAIQKELETLGAKYEAAILEKQKLQEEAEIMERRLIAADKLISGLGSENIRWLNDLDELMHRRVKLLGDCLLCAAFLSYEGAFTWEFRDEMVNRIWQNDILEREIPLSQPFRLESLLTDDVEISRWGSQGLPPDELSVQNGILTTRASRFPLCIDPQQQALNWIKRKEEKNNLRVASFNDPDFLKQLEMSIKYGTPFLFRDVDEYIDPVIDNVLEKNIKVSQGRQFIILGDKEVDYDSNFRLYLNTKLANPRYSPSVFGKAMVINYTVTLKGLEDQLLSVLVAYERRELEEQREHLIQETSENKNLLKDLEDSLLRELATSTGNMLDNVDLVHTLEETKSKATEVSEKLKLAEKTALDIDRLRDGYRPAARRGAILFFVLSEMALVNSMYQYSLIAFLEVFRLSLKKSLPDSILMKRLRNIMDTLTFSIYNHGCTGLFERHKLLFSFNMTIKIEQAEGRVPQEELDFFLKGNISLEKSKRKKPCAWLSDQGWEDIILLSEMFSDNFGQLPDDVENNQTVWQEWYDLDSLEQFPVPLGYDNNITPFQKLLILRCFRVDRVYRAVTDYVTVTMGEKYVQPPMISFEAIFEQSTPHSPIVFILSPGSDPATDLMKLAERSGFGGNRLKFLAMGQGQEKVALQLLETAVARGQWLMLQNCHLLVKWLKDLEKSLERITKPHPDFRLWLTTDPTKGFPIGILQKSLKVVTEPPNGLKLNMRATYFKISHEMLDQCPHPAFKPLVYVLAFFHAVVQERRKFGKIGWNVYYDFNESDFQVCMEILNTYLTKAFQQRDPRIPWGSLKYLIGEVMYGGRAIDSFDRRILTIYMDEYLGDFIFDTFQPFHFFRNKEVDYKIPVGDEKEKFVEAIEALPLANTPEVFGLHPNAEIGYYTQAARDMWAHLLELQPQTGESSSGISRDDYIGQVAKEIENKMPKVFDLDQVRKRLGTGLSPTSVVLLQELERFNKLVVRMTKSLAELQRALAGEVGMSNELDDVARSLFIGHIPNIWRRLAPDTLKSLGNWMVYFLRRFSQYMLWVTESEPSVMWLSGLHIPESYLTALVQATCRKNGWPLDRSTLFTQVTKFQDADEVNERAGQGCFVSGLYLEGADWDIEKGCLIKSKPKVLVVDLPILKIIPIEAHRLKLQNTFRTPVYTTSMRRNAMGVGLVFEADLFTTRHISHWVLQGVCLTLNSD.

Residues 1 to 1793 (MVPEEVEVEI…NIRQCTGTFG (1793 aa)) form a stem region. Residues 46-65 (TESLGQPLNREDEEMDKEIS) are disordered. Coiled coils occupy residues 203 to 223 (NVQK…GEIK), 602 to 622 (QEVK…EDRK), 1071 to 1106 (KLLN…EDLK), and 1217 to 1245 (VELL…KLFD). N1074 is a glycosylation site (N-linked (GlcNAc...) asparagine). The TPR 1 repeat unit spans residues 1221-1254 (GVYERELARHEKSRQELANAEKLFDLPITMYPEL). AAA stretches follow at residues 1794–2015 (YGYE…VLVM), 2075–2294 (DAVE…VIVE), 2417–2665 (IHAP…VFNG), and 2765–3014 (EYNE…LRRS). Residues 1832–1839 (GPAGTGKT) carry the GPAGTGKT motif motif. Residue 1832 to 1839 (GPAGTGKT) participates in ATP binding. The CFDEFNR motif motif lies at 1882-1888 (CFDEFNR). Residues 2113–2120 (GPTRGGKS) and 2455–2462 (GESGTSKT) each bind ATP. TPR repeat units lie at residues 2736–2769 (MALH…YNES) and 2771–2797 (TKMN…MDRG). Positions 2747–2770 (EDIQDYEAAKALFQEILEEYNESN) form a coiled coil. 2803 to 2810 (GVGGSGKQ) is an ATP binding site. The tract at residues 3029 to 3313 (YSKLLDEKTQ…QKLQEEAEIM (285 aa)) is stalk. Coiled-coil stretches lie at residues 3045–3131 (KRLD…LAEV), 3257–3327 (KREK…ISGL), and 3567–3638 (ERRE…EKTA). The interval 3399 to 3629 (LTDDVEISRW…TKSKATEVSE (231 aa)) is AAA 5. One copy of the TPR 4 repeat lies at 3802-3837 (WQEWYDLDSLEQFPVPLGYDNNITPFQKLLILRCFR). The AAA 6 stretch occupies residues 3845 to 4062 (VTDYVTVTMG…FQVCMEILNT (218 aa)). One copy of the TPR 5 repeat lies at 4074 to 4108 (RIPWGSLKYLIGEVMYGGRAIDSFDRRILTIYMDE). Residues 4235–4260 (LLQELERFNKLVVRMTKSLAELQRAL) adopt a coiled-coil conformation.

It belongs to the dynein heavy chain family. Consists of at least two heavy chains and a number of intermediate and light chains. In terms of tissue distribution, expressed primarily in trachea and testis, 2 tissues containing axonemal structures. Also expressed in brain but not in adult heart.

The protein localises to the cytoplasm. It is found in the cytoskeleton. Its subcellular location is the cilium axoneme. Force generating protein of respiratory cilia. Produces force towards the minus ends of microtubules. Dynein has ATPase activity; the force-producing power stroke is thought to occur on release of ADP. Involved in sperm motility; implicated in sperm flagellar assembly. Probable inner arm dynein heavy chain. The sequence is that of Dynein axonemal heavy chain 10 (DNAH10) from Homo sapiens (Human).